A 741-amino-acid chain; its full sequence is Prestin (741 aa).

Topologically, residues 1-79 are cytoplasmic; that stretch reads MDHVEETEIL…WLPAYRFKEY (79 aa). A helical transmembrane segment spans residues 80–105; sequence VLGDIVSGISTGVLQLPQGLAFAMLA. Over 106 to 109 the chain is Extracellular; sequence AVPP. The helical transmembrane segment at 110–125 threads the bilayer; the sequence is VFGLYSSFYPVIMYCF. The Cytoplasmic portion of the chain corresponds to 126–137; it reads FGTSRHISIGPF. The helical transmembrane segment at 138–147 threads the bilayer; the sequence is AVISLMIGGV. Over 148–178 the chain is Extracellular; sequence AVRLVPDDIVIPGGVNATNSTEARDALRVKV. The short motif at 158 to 168 is the Involved in motor function element; that stretch reads IPGGVNATNST. Asn163 and Asn166 each carry an N-linked (GlcNAc...) asparagine glycan. 2 helical membrane passes run 179–208 and 209–230; these read AMSVTLLTGIIQFCLGVCRFGFVAIYLTEP and LVRGFTTAAAVHVFTSMLKYLF. Residues 231 to 243 are Extracellular-facing; sequence GVKTKRYSGIFSV. Positions 244–248 form an intramembrane region, helical; it reads VYSTV. The Extracellular portion of the chain corresponds to 249-261; that stretch reads AVLQNVKNLNVCS. The chain crosses the membrane as a helical span at residues 262–283; it reads LGVGLMVFGLLLGGKEFNERFK. At 284-291 the chain is on the cytoplasmic side; it reads EKLPAPIP. A helical membrane pass occupies residues 292–303; the sequence is LEFFAVVMGTGI. Over 304–338 the chain is Extracellular; it reads SAGFSLHESYNVDVVGTLPLGLLPPANPDTSLFHL. The chain crosses the membrane as a helical span at residues 339–361; it reads VYVDAIAIAIVGFSVTISMAKTL. Residues 362–370 lie on the Cytoplasmic side of the membrane; that stretch reads ANKHGYQVD. The chain crosses the membrane as a helical span at residues 371–388; the sequence is GNQELIALGLCNSTGSLF. Topologically, residues 389–396 are extracellular; it reads QTFAISCS. The chain crosses the membrane as a helical span at residues 397 to 406; sequence LSRSLVQEGT. Ser398 is a binding site for salicylate. The Cytoplasmic segment spans residues 407–410; it reads GGKT. Residues 411-429 traverse the membrane as a helical segment; the sequence is QLAGCLASLMILLVILATG. At 430–436 the chain is on the extracellular side; that stretch reads FLFESLP. Residues 437-459 traverse the membrane as a helical segment; that stretch reads QAVLSAIVIVNLKGMFMQFSDLP. Residues 460 to 467 lie on the Cytoplasmic side of the membrane; that stretch reads FFWRTSKI. A helical transmembrane segment spans residues 468–483; it reads ELTIWLTTFVSSLFLG. A topological domain (extracellular) is located at residue Leu484. The helical transmembrane segment at 485-498 threads the bilayer; sequence DYGLITAVIIALMT. The Cytoplasmic segment spans residues 499-741; the sequence is VIYRTQSPSY…DSEPNATPEA (243 aa). The extended region for STAS domain stretch occupies residues 505–718; that stretch reads SPSYIVLGQL…AVLGSQVREA (214 aa). Residues 525 to 713 form the STAS domain; the sequence is AYEEVKEVPG…HSIHDAVLGS (189 aa). Residues 718 to 741 are disordered; it reads ALAEQEATAAPPQEDSEPNATPEA. A compositionally biased stretch (low complexity) spans 721-730; sequence EQEATAAPPQ.

It belongs to the SLC26A/SulP transporter (TC 2.A.53) family. In terms of assembly, homodimer. Interacts (via STAS domain) with CALM; this interaction is calcium-dependent and the STAS domain interacts with only one lobe of CALM which is an elongated conformation.

Its subcellular location is the cell membrane. It catalyses the reaction 2 hydrogencarbonate(in) + chloride(out) = 2 hydrogencarbonate(out) + chloride(in). In terms of biological role, voltage-sensitive motor protein that drives outer hair cell (OHC) electromotility (eM) and participates in sound amplification in the hearing organ. Converts changes in the transmembrane electric potential into mechanical displacements resulting in the coupling of its expansion to movement of a charged voltage sensor across the lipid membrane. The nature of the voltage sensor is not completely clear, and two models compete. In the first model, acts as an incomplete transporter where intracellular chloride anion acts as extrinsic voltage sensor that drives conformational change in the protein which is sufficient to produce a length change in the plane of the membrane and hence in the length of the OHC. The second model in which multiple charged amino acid residues are distributed at the intracellular and extracellular membrane interfaces that form an intrinsic voltage sensor, whose movement produces the non-linear capacitance (NLC). However, the effective voltage sensor may be the result of a hybrid voltage sensor assembled from intrinsic charge (charged residues) and extrinsic charge (bound anion). Notably, binding of anions to the anion-binding pocket partially neutralizes the intrinsic positive charge rather than to form an electrically negative sensor, therefore remaining charge may serve as voltage sensor that, after depolarization, moves from down (expanded state) to up (contracted) conformation, which is accompanied by an eccentric contraction of the intermembrane cross-sectional area of the protein as well as a major increase in the hydrophobic thickness of the protein having as consequences the plasma membrane thickening and the cell contraction after membrane depolarization. The anion-binding pocket transits from the inward-open (Down) state, where it is exposed toward the intracellular solvent in the absence of anion, to the occluded (Up) state upon anion binding. Salicylate competes for the anion-binding site and inhibits the voltage-sensor movement, and therefore inhibits the charge transfer and electromotility by displacing Cl(-) from the anion-binding site and by preventing the structural transitions to the contracted state. In addition, can act as a weak Cl(-)/HCO3 (-) antiporter across the cell membrane and so regulate the intracellular pH of the outer hair cells (OHCs), while firstly found as being unable to mediate electrogenic anion transport. Moreover, supports a role in cardiac mechanical amplification serving as an elastic element to enhance the actomyosin- based sarcomere contraction system. The polypeptide is Prestin (Tursiops truncatus (Atlantic bottle-nosed dolphin)).